A 660-amino-acid chain; its full sequence is Bifunctional polymyxin resistance protein ArnA (660 aa).

Residues 1-304 (MKAVVFAYHD…TLGLVAGARL (304 aa)) form a formyltransferase ArnAFT region. His-104 serves as the catalytic Proton donor; for formyltransferase activity. Residues Arg-114 and 136 to 140 (VKRAD) contribute to the (6R)-10-formyltetrahydrofolate site. Residues 314–660 (RRTRVLILGV…QSVEPGDAEE (347 aa)) form a dehydrogenase ArnADH region. Residues Asp-347 and 368–369 (DI) each bind NAD(+). Residues Ala-393, Tyr-398, and 432–433 (TS) each bind UDP-alpha-D-glucuronate. Glu-434 (proton acceptor; for decarboxylase activity) is an active-site residue. UDP-alpha-D-glucuronate-binding positions include Arg-460, Asn-492, 526–535 (KLIDGGRQKR), and Tyr-613. The Proton donor; for decarboxylase activity role is filled by Arg-619.

It in the N-terminal section; belongs to the Fmt family. UDP-L-Ara4N formyltransferase subfamily. The protein in the C-terminal section; belongs to the NAD(P)-dependent epimerase/dehydratase family. UDP-glucuronic acid decarboxylase subfamily. As to quaternary structure, homohexamer, formed by a dimer of trimers.

It carries out the reaction UDP-alpha-D-glucuronate + NAD(+) = UDP-beta-L-threo-pentopyranos-4-ulose + CO2 + NADH. The enzyme catalyses UDP-4-amino-4-deoxy-beta-L-arabinose + (6R)-10-formyltetrahydrofolate = UDP-4-deoxy-4-formamido-beta-L-arabinose + (6S)-5,6,7,8-tetrahydrofolate + H(+). Its pathway is nucleotide-sugar biosynthesis; UDP-4-deoxy-4-formamido-beta-L-arabinose biosynthesis; UDP-4-deoxy-4-formamido-beta-L-arabinose from UDP-alpha-D-glucuronate: step 1/3. It participates in nucleotide-sugar biosynthesis; UDP-4-deoxy-4-formamido-beta-L-arabinose biosynthesis; UDP-4-deoxy-4-formamido-beta-L-arabinose from UDP-alpha-D-glucuronate: step 3/3. It functions in the pathway bacterial outer membrane biogenesis; lipopolysaccharide biosynthesis. Its function is as follows. Bifunctional enzyme that catalyzes the oxidative decarboxylation of UDP-glucuronic acid (UDP-GlcUA) to UDP-4-keto-arabinose (UDP-Ara4O) and the addition of a formyl group to UDP-4-amino-4-deoxy-L-arabinose (UDP-L-Ara4N) to form UDP-L-4-formamido-arabinose (UDP-L-Ara4FN). The modified arabinose is attached to lipid A and is required for resistance to polymyxin and cationic antimicrobial peptides. The sequence is that of Bifunctional polymyxin resistance protein ArnA from Erwinia tasmaniensis (strain DSM 17950 / CFBP 7177 / CIP 109463 / NCPPB 4357 / Et1/99).